The primary structure comprises 357 residues: Alanine racemase (357 aa).

Lysine 33 acts as the Proton acceptor; specific for D-alanine in catalysis. Lysine 33 bears the N6-(pyridoxal phosphate)lysine mark. Arginine 129 is a substrate binding site. Tyrosine 253 acts as the Proton acceptor; specific for L-alanine in catalysis. Position 301 (methionine 301) interacts with substrate.

The protein belongs to the alanine racemase family. It depends on pyridoxal 5'-phosphate as a cofactor.

The catalysed reaction is L-alanine = D-alanine. It functions in the pathway amino-acid biosynthesis; D-alanine biosynthesis; D-alanine from L-alanine: step 1/1. Its function is as follows. Catalyzes the interconversion of L-alanine and D-alanine. May also act on other amino acids. The polypeptide is Alanine racemase (alr) (Pseudomonas syringae pv. syringae (strain B728a)).